Consider the following 383-residue polypeptide: Chitinase-3-like protein 1 (383 aa).

An N-terminal signal peptide occupies residues 1 to 21 (MGLRVAQTGFVVLVLLQSCAA). One can recognise a GH18 domain in the interval 22-383 (YKLICYYTSW…NAIKDVLAGV (362 aa)). Cys26 and Cys51 are disulfide-bonded. Asn60 carries N-linked (GlcNAc...) asparagine glycosylation. Chitin-binding positions include 70 to 71 (EW), 97 to 100 (GGWN), Tyr141, 204 to 207 (LTYD), and Lys263. A disulfide bridge links Cys300 with Cys364. The interval 324–338 (QWVAYDDQESVKNKA) is important for AKT1 activation and IL8 production. Trp352 is a chitin binding site.

The protein belongs to the glycosyl hydrolase 18 family. Monomer. As to expression, detected in mammary gland.

The protein resides in the secreted. It is found in the extracellular space. The protein localises to the cytoplasm. Its subcellular location is the perinuclear region. It localises to the endoplasmic reticulum. Carbohydrate-binding lectin with a preference for chitin. Has no chitinase activity. May play a role in tissue remodeling and in the capacity of cells to respond to and cope with changes in their environment. Plays a role in T-helper cell type 2 (Th2) inflammatory response and IL-13-induced inflammation, regulating allergen sensitization, inflammatory cell apoptosis, dendritic cell accumulation and M2 macrophage differentiation. Facilitates invasion of pathogenic enteric bacteria into colonic mucosa and lymphoid organs. Mediates activation of AKT1 signaling pathway and subsequent IL8 production in colonic epithelial cells. Regulates antibacterial responses in lung by contributing to macrophage bacterial killing, controlling bacterial dissemination and augmenting host tolerance. Also regulates hyperoxia-induced injury, inflammation and epithelial apoptosis in lung. In Bubalus bubalis (Domestic water buffalo), this protein is Chitinase-3-like protein 1 (CHI3L1).